Consider the following 371-residue polypeptide: MSTAERAPILLTPGPLTTSYRTRRAMMVDWGSWDSDFNELTASVCQRLLKIVGGEGSHTCVPLQGSGTFAVEAAIGTLVPRDGKVLVLINGAYGKRLAKICEVLQRPFSTFETEENVPTTAADVERLLAADPAISHVALIHCETSTGILNPLEAIAKVVERHGKRLIVDAMSSFGAIGIDARKVPFDALIAASGKCLEGVPGMGFVFARSAALEASAGNCHSLAMDLQDQHAYMRKTGQWRFTPPTHVVAALHEALSQYEEEGGLPARQRRYASNCETLLGEMARLGFRSFLPAEIQAPIIVTFHAPRDPRYRFADFYQRVREKGFILYPGKLTQVETFRVGCIGHVDAAEMRQAVAAIGEALRELEVLEI.

Lysine 195 bears the N6-(pyridoxal phosphate)lysine mark.

The protein belongs to the class-V pyridoxal-phosphate-dependent aminotransferase family. PhnW subfamily. In terms of assembly, homodimer. Requires pyridoxal 5'-phosphate as cofactor.

The enzyme catalyses (2-aminoethyl)phosphonate + pyruvate = phosphonoacetaldehyde + L-alanine. Involved in phosphonate degradation. This chain is 2-aminoethylphosphonate--pyruvate transaminase, found in Pseudomonas aeruginosa (strain UCBPP-PA14).